A 364-amino-acid chain; its full sequence is Hsp70-binding protein 1 (364 aa).

The interval 1-75 (MSDEGSRGSR…DPPPEPMSEE (75 aa)) is disordered. Residues 23-42 (SSGGGGGGGGGGSSSAGGSG) are compositionally biased toward gly residues. 4 ARM repeats span residues 137 to 179 (ENMD…TCSQ), 182 to 222 (AAIQ…CLVR), 225 to 264 (EAGL…NLLV), and 267 to 306 (PEHR…SLVT). A phosphoserine mark is found at Ser356 and Ser361.

Interacts with the ATP-binding domain of HSPA1A. Detected in a ternary complex containing STUB1, HSPA1A and HSPBP1. Interacts with PGLYRP1; this interaction blocks the cytotoxic activity of the PGLYRP1-HSPA1A complex.

Its function is as follows. Inhibits HSPA1A chaperone activity by changing the conformation of the ATP-binding domain of HSPA1A and interfering with ATP binding. Interferes with ubiquitination mediated by STUB1 and inhibits chaperone-assisted degradation of target proteins. The sequence is that of Hsp70-binding protein 1 (HSPBP1) from Macaca fascicularis (Crab-eating macaque).